We begin with the raw amino-acid sequence, 475 residues long: Ribulose bisphosphate carboxylase large chain (475 aa).

Positions 1-2 (MS) are excised as a propeptide. At proline 3 the chain carries N-acetylproline. Position 14 is an N6,N6,N6-trimethyllysine (lysine 14). Residues asparagine 123 and threonine 173 each contribute to the substrate site. The Proton acceptor role is filled by lysine 175. A substrate-binding site is contributed by lysine 177. 3 residues coordinate Mg(2+): lysine 201, aspartate 203, and glutamate 204. Lysine 201 carries the post-translational modification N6-carboxylysine. Catalysis depends on histidine 294, which acts as the Proton acceptor. Substrate contacts are provided by arginine 295, histidine 327, and serine 379.

This sequence belongs to the RuBisCO large chain family. Type I subfamily. Heterohexadecamer of 8 large chains and 8 small chains; disulfide-linked. The disulfide link is formed within the large subunit homodimers. Requires Mg(2+) as cofactor. Post-translationally, the disulfide bond which can form in the large chain dimeric partners within the hexadecamer appears to be associated with oxidative stress and protein turnover.

It localises to the plastid. It is found in the chloroplast. The catalysed reaction is 2 (2R)-3-phosphoglycerate + 2 H(+) = D-ribulose 1,5-bisphosphate + CO2 + H2O. It carries out the reaction D-ribulose 1,5-bisphosphate + O2 = 2-phosphoglycolate + (2R)-3-phosphoglycerate + 2 H(+). Functionally, ruBisCO catalyzes two reactions: the carboxylation of D-ribulose 1,5-bisphosphate, the primary event in carbon dioxide fixation, as well as the oxidative fragmentation of the pentose substrate in the photorespiration process. Both reactions occur simultaneously and in competition at the same active site. This Pinus krempfii (Krempf's pine) protein is Ribulose bisphosphate carboxylase large chain.